Reading from the N-terminus, the 142-residue chain is MKTFSAKPAEVKRDWYLVDASGKTLGRLASEVARRLRGKHKPEYTPHVDTGDYIVIINADKVRVSGKKAQDKMYYHHTGYIGHMKSMNFNQLMERAPERAIEFAVKGMLPKNPLGRAMFKKLKVYAGTEHKHTAQQPQALEL.

Belongs to the universal ribosomal protein uL13 family. As to quaternary structure, part of the 50S ribosomal subunit.

This protein is one of the early assembly proteins of the 50S ribosomal subunit, although it is not seen to bind rRNA by itself. It is important during the early stages of 50S assembly. This chain is Large ribosomal subunit protein uL13, found in Thioalkalivibrio sulfidiphilus (strain HL-EbGR7).